Here is a 1773-residue protein sequence, read N- to C-terminus: Disco-interacting protein 2 (1773 aa).

A DMAP1-binding domain is found at 3–110 (HTASLPGYVR…QRHSKKIDFH (108 aa)). Residues tyrosine 60 and tyrosine 61 each carry the phosphotyrosine modification. Disordered regions lie at residues 112–185 (QAAM…YHSE) and 198–319 (LKGR…PLSS). Polar residues-rich tracts occupy residues 113 to 125 (AAMS…QSGN) and 146 to 165 (YQNT…NNSQ). A compositionally biased stretch (basic residues) spans 166 to 175 (HRQRRTQRKV). Positions 176–185 (THNEKRYHSE) are enriched in basic and acidic residues. Acidic residues predominate over residues 224 to 236 (DELDSSTDDESIP). Residues 241-253 (SPDKEYNYPRDHI) are compositionally biased toward basic and acidic residues. The segment covering 272–297 (SMGSQQHARTDVKQNQITNQKYTAPN) has biased composition (polar residues).

Belongs to the DIP2 family. Interacts with Disco. As to expression, expressed in the developing nervous system. Ubiquitously expressed in the developing brain. Within the mushroom body, a higher level is detected in the core of lobes and peduncle in the late third instar larva. Detected in whole mushroom body neuron structures at 48 hours after puparium formation and during later stages.

It is found in the cell membrane. In terms of biological role, required for precise axonal bifurcation in mushroom body neurons by suppressing ectopic bifurcation and regulating the guidance of sister axons. May function by regulating expression of tdp1. Acts downstream of the serine/threonine-protein kinase Bsk to modulate the direction of axon projection. May play a role in fatty acid metabolism. The polypeptide is Disco-interacting protein 2 (Drosophila melanogaster (Fruit fly)).